The primary structure comprises 122 residues: Large ribosomal subunit protein uL14c (122 aa).

This sequence belongs to the universal ribosomal protein uL14 family. In terms of assembly, part of the 50S ribosomal subunit.

It is found in the plastid. The protein resides in the chloroplast. Binds to 23S rRNA. In Eucalyptus globulus subsp. globulus (Tasmanian blue gum), this protein is Large ribosomal subunit protein uL14c.